The following is a 177-amino-acid chain: Adenine phosphoribosyltransferase (177 aa).

It belongs to the purine/pyrimidine phosphoribosyltransferase family. In terms of assembly, homodimer.

It localises to the cytoplasm. It carries out the reaction AMP + diphosphate = 5-phospho-alpha-D-ribose 1-diphosphate + adenine. It participates in purine metabolism; AMP biosynthesis via salvage pathway; AMP from adenine: step 1/1. Catalyzes a salvage reaction resulting in the formation of AMP, that is energically less costly than de novo synthesis. This Idiomarina loihiensis (strain ATCC BAA-735 / DSM 15497 / L2-TR) protein is Adenine phosphoribosyltransferase.